A 470-amino-acid chain; its full sequence is Argininosuccinate lyase (470 aa).

Belongs to the lyase 1 family. Argininosuccinate lyase subfamily.

It is found in the cytoplasm. It catalyses the reaction 2-(N(omega)-L-arginino)succinate = fumarate + L-arginine. It participates in amino-acid biosynthesis; L-arginine biosynthesis; L-arginine from L-ornithine and carbamoyl phosphate: step 3/3. This is Argininosuccinate lyase from Mycobacterium tuberculosis (strain CDC 1551 / Oshkosh).